Consider the following 190-residue polypeptide: Proline-rich protein 3 (190 aa).

Disordered regions lie at residues 1-94 (MPKR…GLGP), 110-130 (PPFPGPGHGGPSRESFYKEAR), and 142-161 (KNTYPPKDSPQMMEDKSDRP). Pro residues predominate over residues 37-48 (MGPPSLLGPPPM). Residues 157 to 185 (KSDRPVCRHFSKKGHCRYEDHCAFYHPGV) form a C3H1-type zinc finger.

This chain is Proline-rich protein 3 (Prr3), found in Mus musculus (Mouse).